The sequence spans 39 residues: Ribonuclease UK114 (39 aa).

Belongs to the RutC family. Monomer. The N-terminus may be blocked. In terms of tissue distribution, mainly expressed in the liver and kidney. Lower expression found in intestine, gizzard, glandular stomach, heart, brain and spleen.

It localises to the cytoplasm. In terms of biological role, endoribonuclease responsible for the inhibition of the translation by cleaving mRNA. Inhibits cell-free protein synthesis. Cleaves phosphodiester bonds only in single-stranded RNA. This Gallus gallus (Chicken) protein is Ribonuclease UK114.